A 54-amino-acid chain; its full sequence is Large ribosomal subunit protein bL33 (54 aa).

Belongs to the bacterial ribosomal protein bL33 family.

The polypeptide is Large ribosomal subunit protein bL33 (Stenotrophomonas maltophilia (strain R551-3)).